Reading from the N-terminus, the 146-residue chain is MPKALIVYGSTTGNTEGVAEAIAKTLNSEGMETTVVNVADVTAPGLAEGYDVVLLGCSTWGDDEIELQEDFVPLYEDLDRAGLKDKKVGVFGCGDSSYTYFCGAVDVIEKKAEELGATLVASSLKIDGEPDSAEVLDWAREVLARV.

The Flavodoxin-like domain maps to 4–143; it reads ALIVYGSTTG…EVLDWAREVL (140 aa).

Belongs to the flavodoxin family. It depends on FMN as a cofactor.

Functionally, electron-transfer proteins that function in various electron transport systems in microorganisms. Functionally interchangeable with ferredoxin. This chain is Flavodoxin, found in Megalodesulfovibrio gigas (strain ATCC 19364 / DSM 1382 / NCIMB 9332 / VKM B-1759) (Desulfovibrio gigas).